A 372-amino-acid chain; its full sequence is Chaperone protein DnaJ (372 aa).

Residues 3 to 68 enclose the J domain; that stretch reads NLYEILEVNE…EKRKKYDMYG (66 aa). The CR-type zinc-finger motif lies at 130-212; that stretch reads GTKKEISYKK…CKGKGYEIER (83 aa). Zn(2+) contacts are provided by Cys-143, Cys-146, Cys-160, Cys-163, Cys-186, Cys-189, Cys-200, and Cys-203. CXXCXGXG motif repeat units lie at residues 143–150, 160–167, 186–193, and 200–207; these read CHVCNGDG, CEKCHGTG, CDKCHGEG, and CENCKGKG.

The protein belongs to the DnaJ family. In terms of assembly, homodimer. It depends on Zn(2+) as a cofactor.

It localises to the cytoplasm. Participates actively in the response to hyperosmotic and heat shock by preventing the aggregation of stress-denatured proteins and by disaggregating proteins, also in an autonomous, DnaK-independent fashion. Unfolded proteins bind initially to DnaJ; upon interaction with the DnaJ-bound protein, DnaK hydrolyzes its bound ATP, resulting in the formation of a stable complex. GrpE releases ADP from DnaK; ATP binding to DnaK triggers the release of the substrate protein, thus completing the reaction cycle. Several rounds of ATP-dependent interactions between DnaJ, DnaK and GrpE are required for fully efficient folding. Also involved, together with DnaK and GrpE, in the DNA replication of plasmids through activation of initiation proteins. In Finegoldia magna (strain ATCC 29328 / DSM 20472 / WAL 2508) (Peptostreptococcus magnus), this protein is Chaperone protein DnaJ.